Consider the following 456-residue polypeptide: Transcription factor bHLH62 (456 aa).

Residues 159–185 (RTNSPFPINNEPPITTNEKMPRVSSSP) show a composition bias toward polar residues. The tract at residues 159-254 (RTNSPFPINN…KTKSIDPYKD (96 aa)) is disordered. The span at 223–254 (KEIEEKEDSDPKRCKKSEENGDKTKSIDPYKD) shows a compositional bias: basic and acidic residues. One can recognise a bHLH domain in the interval 264 to 314 (QATDSHSLAERVRREKISERMKLLQDLVPGCNKVTGKALMLDEIINYVQSL).

Homodimer. In terms of tissue distribution, expressed constitutively in roots, leaves, stems, and flowers.

The protein localises to the nucleus. The chain is Transcription factor bHLH62 (BHLH62) from Arabidopsis thaliana (Mouse-ear cress).